Reading from the N-terminus, the 72-residue chain is Translation initiation factor IF-1 (72 aa).

Residues 1–72 form the S1-like domain; sequence MAKEDSIEMQ…SKGRIVFRAR (72 aa).

The protein belongs to the IF-1 family. As to quaternary structure, component of the 30S ribosomal translation pre-initiation complex which assembles on the 30S ribosome in the order IF-2 and IF-3, IF-1 and N-formylmethionyl-tRNA(fMet); mRNA recruitment can occur at any time during PIC assembly.

The protein localises to the cytoplasm. Functionally, one of the essential components for the initiation of protein synthesis. Stabilizes the binding of IF-2 and IF-3 on the 30S subunit to which N-formylmethionyl-tRNA(fMet) subsequently binds. Helps modulate mRNA selection, yielding the 30S pre-initiation complex (PIC). Upon addition of the 50S ribosomal subunit IF-1, IF-2 and IF-3 are released leaving the mature 70S translation initiation complex. This chain is Translation initiation factor IF-1, found in Psychromonas ingrahamii (strain DSM 17664 / CCUG 51855 / 37).